The following is a 440-amino-acid chain: Probable secretory pathway GDP dissociation inhibitor 1 (440 aa).

This sequence belongs to the Rab GDI family.

In Schizosaccharomyces pombe (strain 972 / ATCC 24843) (Fission yeast), this protein is Probable secretory pathway GDP dissociation inhibitor 1 (gdi1).